The chain runs to 382 residues: Caspase-1-B (382 aa).

Positions M1–E98 are excised as a propeptide. Catalysis depends on residues H216 and C270. Positions D283–D292 are excised as a propeptide.

This sequence belongs to the peptidase C14A family. In terms of assembly, heterotetramer that consists of two anti-parallel arranged heterodimers, each one formed by a 20 kDa (Caspase-1 subunit p20) and a 10 kDa (Caspase-1 subunit p10) subunit. Heterotetramer that consists of two anti-parallel arranged heterodimers, each one formed by a 20 kDa (Caspase-1 subunit p20) and a 10 kDa (Caspase-1 subunit p10) subunit. Can form a heterodimer with isoform epsilon which then has an inhibitory effect. Post-translationally, the two subunits are derived from the precursor sequence by an autocatalytic mechanism.

The protein localises to the cytoplasm. The protein resides in the cell membrane. It carries out the reaction Strict requirement for an Asp residue at position P1 and has a preferred cleavage sequence of Tyr-Val-Ala-Asp-|-.. Functionally, thiol protease involved in a variety of inflammatory processes by proteolytically cleaving other proteins, such as the precursors of the inflammatory cytokines interleukin-1 beta (IL1B) and interleukin 18 (IL18) as well as the pyroptosis inducer Gasdermin-D (GSDMD), into active mature peptides. Plays a key role in cell immunity as an inflammatory response initiator: once activated through formation of an inflammasome complex, it initiates a pro-inflammatory response through the cleavage of the two inflammatory cytokines IL1B and IL18, releasing the mature cytokines which are involved in a variety of inflammatory processes. Cleaves a tetrapeptide after an Asp residue at position P1. Also initiates pyroptosis, a programmed lytic cell death pathway, through cleavage of GSDMD. The sequence is that of Caspase-1-B (casp1-b) from Xenopus laevis (African clawed frog).